Reading from the N-terminus, the 483-residue chain is Altronate oxidoreductase (483 aa).

18-29 provides a ligand contact to NAD(+); sequence IIQFGEGNFLRA.

This sequence belongs to the mannitol dehydrogenase family. UxaB subfamily.

The enzyme catalyses D-altronate + NAD(+) = keto-D-tagaturonate + NADH + H(+). Its pathway is carbohydrate metabolism; pentose and glucuronate interconversion. The protein is Altronate oxidoreductase of Escherichia coli (strain 55989 / EAEC).